A 326-amino-acid chain; its full sequence is 4-hydroxy-3-methylbut-2-enyl diphosphate reductase (326 aa).

Cysteine 22 provides a ligand contact to [4Fe-4S] cluster. The (2E)-4-hydroxy-3-methylbut-2-enyl diphosphate site is built by histidine 51 and histidine 84. 2 residues coordinate dimethylallyl diphosphate: histidine 51 and histidine 84. 2 residues coordinate isopentenyl diphosphate: histidine 51 and histidine 84. Cysteine 106 contributes to the [4Fe-4S] cluster binding site. Residue histidine 134 coordinates (2E)-4-hydroxy-3-methylbut-2-enyl diphosphate. Histidine 134 serves as a coordination point for dimethylallyl diphosphate. Histidine 134 is an isopentenyl diphosphate binding site. Glutamate 136 serves as the catalytic Proton donor. Residue threonine 174 coordinates (2E)-4-hydroxy-3-methylbut-2-enyl diphosphate. Residue cysteine 204 coordinates [4Fe-4S] cluster. Residues serine 232, serine 233, asparagine 234, and serine 276 each contribute to the (2E)-4-hydroxy-3-methylbut-2-enyl diphosphate site. Dimethylallyl diphosphate contacts are provided by serine 232, serine 233, asparagine 234, and serine 276. Residues serine 232, serine 233, asparagine 234, and serine 276 each coordinate isopentenyl diphosphate.

The protein belongs to the IspH family. [4Fe-4S] cluster is required as a cofactor.

The enzyme catalyses isopentenyl diphosphate + 2 oxidized [2Fe-2S]-[ferredoxin] + H2O = (2E)-4-hydroxy-3-methylbut-2-enyl diphosphate + 2 reduced [2Fe-2S]-[ferredoxin] + 2 H(+). The catalysed reaction is dimethylallyl diphosphate + 2 oxidized [2Fe-2S]-[ferredoxin] + H2O = (2E)-4-hydroxy-3-methylbut-2-enyl diphosphate + 2 reduced [2Fe-2S]-[ferredoxin] + 2 H(+). It functions in the pathway isoprenoid biosynthesis; dimethylallyl diphosphate biosynthesis; dimethylallyl diphosphate from (2E)-4-hydroxy-3-methylbutenyl diphosphate: step 1/1. The protein operates within isoprenoid biosynthesis; isopentenyl diphosphate biosynthesis via DXP pathway; isopentenyl diphosphate from 1-deoxy-D-xylulose 5-phosphate: step 6/6. In terms of biological role, catalyzes the conversion of 1-hydroxy-2-methyl-2-(E)-butenyl 4-diphosphate (HMBPP) into a mixture of isopentenyl diphosphate (IPP) and dimethylallyl diphosphate (DMAPP). Acts in the terminal step of the DOXP/MEP pathway for isoprenoid precursor biosynthesis. This Bordetella bronchiseptica (strain ATCC BAA-588 / NCTC 13252 / RB50) (Alcaligenes bronchisepticus) protein is 4-hydroxy-3-methylbut-2-enyl diphosphate reductase.